Reading from the N-terminus, the 331-residue chain is Putative sigma L-dependent transcriptional regulator YplP (331 aa).

Residues 12–213 (HLIGEHQTFL…LKNAADYMAA (202 aa)) enclose the Sigma-54 factor interaction domain. 95 to 104 (AVRGTLFLDD) contributes to the ATP binding site.

Functionally, may play a role in cold adaptation. The protein is Putative sigma L-dependent transcriptional regulator YplP (yplP) of Bacillus subtilis (strain 168).